Reading from the N-terminus, the 194-residue chain is Pyridoxal 5'-phosphate synthase subunit PdxT (194 aa).

50-52 serves as a coordination point for L-glutamine; the sequence is GES. Cys82 serves as the catalytic Nucleophile. L-glutamine-binding positions include Arg109 and 136–137; that span reads IR. Catalysis depends on charge relay system residues His172 and Glu174.

Belongs to the glutaminase PdxT/SNO family. In the presence of PdxS, forms a dodecamer of heterodimers. Only shows activity in the heterodimer.

The catalysed reaction is aldehydo-D-ribose 5-phosphate + D-glyceraldehyde 3-phosphate + L-glutamine = pyridoxal 5'-phosphate + L-glutamate + phosphate + 3 H2O + H(+). It catalyses the reaction L-glutamine + H2O = L-glutamate + NH4(+). Its pathway is cofactor biosynthesis; pyridoxal 5'-phosphate biosynthesis. Its function is as follows. Catalyzes the hydrolysis of glutamine to glutamate and ammonia as part of the biosynthesis of pyridoxal 5'-phosphate. The resulting ammonia molecule is channeled to the active site of PdxS. This chain is Pyridoxal 5'-phosphate synthase subunit PdxT, found in Streptococcus pneumoniae (strain CGSP14).